A 79-amino-acid polypeptide reads, in one-letter code: Biotin synthase auxiliary protein (79 aa).

This sequence belongs to the BsaP family. The cofactor is iron-sulfur cluster.

Its function is as follows. Required for the activity of the biotin synthase BioB. The polypeptide is Biotin synthase auxiliary protein (Mycobacterium bovis (strain ATCC BAA-935 / AF2122/97)).